Consider the following 166-residue polypeptide: Endoribonuclease YbeY (166 aa).

Zn(2+) contacts are provided by histidine 129, histidine 133, and histidine 139.

Belongs to the endoribonuclease YbeY family. Requires Zn(2+) as cofactor.

It is found in the cytoplasm. In terms of biological role, single strand-specific metallo-endoribonuclease involved in late-stage 70S ribosome quality control and in maturation of the 3' terminus of the 16S rRNA. The protein is Endoribonuclease YbeY of Heliobacterium modesticaldum (strain ATCC 51547 / Ice1).